Consider the following 79-residue polypeptide: Sulfur carrier protein TusA (79 aa).

Cys17 functions as the Cysteine persulfide intermediate in the catalytic mechanism.

It belongs to the sulfur carrier protein TusA family.

It is found in the cytoplasm. Its function is as follows. Sulfur carrier protein which probably makes part of a sulfur-relay system. This Haemophilus influenzae (strain PittEE) protein is Sulfur carrier protein TusA.